The chain runs to 140 residues: MDSPENTVPASVDIYAVLSILLVAIMWGATNPFIKRGSIGYNELKADSKLGQLWLEVRFLITRWQYLLPLVINQLGSIVYVLTLQRTELSLTVPMANSLTFVFTAITARLLGERQSGWKIYCGMTLVILGTVICGLDKML.

4 helical membrane-spanning segments follow: residues Ile-14 to Ile-34, Trp-64 to Leu-84, Glu-88 to Ala-108, and Ser-116 to Leu-136.

This sequence belongs to the TMEM234 family.

It is found in the membrane. This Anopheles gambiae (African malaria mosquito) protein is Transmembrane protein 234 homolog.